We begin with the raw amino-acid sequence, 200 residues long: Cytochrome c biogenesis ATP-binding export protein CcmA (200 aa).

The region spanning 1 to 200 (MRLSGRGLRC…TREMRIGAAA (200 aa)) is the ABC transporter domain. Position 35-42 (35-42 (GRNGAGKT)) interacts with ATP.

Belongs to the ABC transporter superfamily. CcmA exporter (TC 3.A.1.107) family. As to quaternary structure, the complex is composed of two ATP-binding proteins (CcmA) and two transmembrane proteins (CcmB).

The protein localises to the cell inner membrane. It carries out the reaction heme b(in) + ATP + H2O = heme b(out) + ADP + phosphate + H(+). Its function is as follows. Part of the ABC transporter complex CcmAB involved in the biogenesis of c-type cytochromes; once thought to export heme, this seems not to be the case, but its exact role is uncertain. Responsible for energy coupling to the transport system. This chain is Cytochrome c biogenesis ATP-binding export protein CcmA, found in Rhodopseudomonas palustris (strain HaA2).